We begin with the raw amino-acid sequence, 355 residues long: Tetraacyldisaccharide 4'-kinase (355 aa).

49 to 56 (SAGGTGKT) contacts ATP.

Belongs to the LpxK family.

The enzyme catalyses a lipid A disaccharide + ATP = a lipid IVA + ADP + H(+). It participates in glycolipid biosynthesis; lipid IV(A) biosynthesis; lipid IV(A) from (3R)-3-hydroxytetradecanoyl-[acyl-carrier-protein] and UDP-N-acetyl-alpha-D-glucosamine: step 6/6. Transfers the gamma-phosphate of ATP to the 4'-position of a tetraacyldisaccharide 1-phosphate intermediate (termed DS-1-P) to form tetraacyldisaccharide 1,4'-bis-phosphate (lipid IVA). This chain is Tetraacyldisaccharide 4'-kinase, found in Chlorobium phaeobacteroides (strain DSM 266 / SMG 266 / 2430).